A 232-amino-acid chain; its full sequence is Flavin-dependent thymidylate synthase (232 aa).

The ThyX domain occupies 1–204 (MKIALLQHTP…PTIFRDAGPG (204 aa)). FAD is bound by residues Ser-55, 79-81 (RHR), and Gln-87. DUMP-binding positions include 76-79 (QLVR), 87-91 (QQSQR), and Arg-143. The ThyX motif motif lies at 79–89 (RHRIASYSQQS). FAD contacts are provided by residues 159-161 (NAR) and His-165. Arg-170 lines the dUMP pocket. The Involved in ionization of N3 of dUMP, leading to its activation role is filled by Arg-170.

The protein belongs to the thymidylate synthase ThyX family. Homotetramer. It depends on FAD as a cofactor.

It carries out the reaction dUMP + (6R)-5,10-methylene-5,6,7,8-tetrahydrofolate + NADPH + H(+) = dTMP + (6S)-5,6,7,8-tetrahydrofolate + NADP(+). Its pathway is pyrimidine metabolism; dTTP biosynthesis. Its function is as follows. Catalyzes the reductive methylation of 2'-deoxyuridine-5'-monophosphate (dUMP) to 2'-deoxythymidine-5'-monophosphate (dTMP) while utilizing 5,10-methylenetetrahydrofolate (mTHF) as the methyl donor, and NADPH and FADH(2) as the reductant. The chain is Flavin-dependent thymidylate synthase from Geobacter sulfurreducens (strain ATCC 51573 / DSM 12127 / PCA).